The primary structure comprises 295 residues: Aspartate carbamoyltransferase catalytic subunit (295 aa).

Carbamoyl phosphate is bound by residues Arg49 and Thr50. Lys77 provides a ligand contact to L-aspartate. Residues Arg99, His127, and Gln130 each coordinate carbamoyl phosphate. Residues Arg161 and Arg212 each contribute to the L-aspartate site. Carbamoyl phosphate-binding residues include Gly251 and Pro252.

The protein belongs to the aspartate/ornithine carbamoyltransferase superfamily. ATCase family. Heterododecamer (2C3:3R2) of six catalytic PyrB chains organized as two trimers (C3), and six regulatory PyrI chains organized as three dimers (R2).

The enzyme catalyses carbamoyl phosphate + L-aspartate = N-carbamoyl-L-aspartate + phosphate + H(+). It participates in pyrimidine metabolism; UMP biosynthesis via de novo pathway; (S)-dihydroorotate from bicarbonate: step 2/3. Catalyzes the condensation of carbamoyl phosphate and aspartate to form carbamoyl aspartate and inorganic phosphate, the committed step in the de novo pyrimidine nucleotide biosynthesis pathway. The chain is Aspartate carbamoyltransferase catalytic subunit from Campylobacter jejuni subsp. doylei (strain ATCC BAA-1458 / RM4099 / 269.97).